Here is a 318-residue protein sequence, read N- to C-terminus: Malate dehydrogenase (318 aa).

NAD(+) is bound by residues 10–15 (GAGNIG) and Asp34. Substrate contacts are provided by Arg83 and Arg89. NAD(+) is bound by residues Asn96 and 119 to 121 (ITN). Residues Asn121 and Arg152 each contribute to the substrate site. His176 acts as the Proton acceptor in catalysis.

Belongs to the LDH/MDH superfamily. MDH type 3 family.

It carries out the reaction (S)-malate + NAD(+) = oxaloacetate + NADH + H(+). Its function is as follows. Catalyzes the reversible oxidation of malate to oxaloacetate. The polypeptide is Malate dehydrogenase (Rhodospirillum rubrum (strain ATCC 11170 / ATH 1.1.1 / DSM 467 / LMG 4362 / NCIMB 8255 / S1)).